Reading from the N-terminus, the 356-residue chain is Ubiquitin-conjugating enzyme E2 Z (356 aa).

Low complexity predominate over residues Met-1–Ala-16. The tract at residues Met-1–Gly-22 is disordered. The UBC core domain maps to Gln-101–Val-255. Cys-190 acts as the Glycyl thioester intermediate in catalysis. The disordered stretch occupies residues Asn-334 to Val-356. Ser-339 carries the phosphoserine modification.

Belongs to the ubiquitin-conjugating enzyme family.

Its subcellular location is the cytoplasm. The protein localises to the nucleus. The catalysed reaction is S-ubiquitinyl-[E1 ubiquitin-activating enzyme]-L-cysteine + [E2 ubiquitin-conjugating enzyme]-L-cysteine = [E1 ubiquitin-activating enzyme]-L-cysteine + S-ubiquitinyl-[E2 ubiquitin-conjugating enzyme]-L-cysteine.. Its pathway is protein modification; protein ubiquitination. Catalyzes the covalent attachment of ubiquitin to other proteins. Specific substrate for UBA6, not charged with ubiquitin by UBE1. May be involved in apoptosis regulation. The chain is Ubiquitin-conjugating enzyme E2 Z (Ube2z) from Rattus norvegicus (Rat).